We begin with the raw amino-acid sequence, 370 residues long: DNA primase large subunit PriL (370 aa).

[4Fe-4S] cluster-binding residues include cysteine 268, cysteine 341, cysteine 350, and cysteine 354.

The protein belongs to the eukaryotic-type primase large subunit family. As to quaternary structure, heterodimer of a small subunit (PriS) and a large subunit (PriL). Requires [4Fe-4S] cluster as cofactor.

Regulatory subunit of DNA primase, an RNA polymerase that catalyzes the synthesis of short RNA molecules used as primers for DNA polymerase during DNA replication. Stabilizes and modulates the activity of the small subunit, increasing the rate of DNA synthesis, and conferring RNA synthesis capability. The DNA polymerase activity may enable DNA primase to also catalyze primer extension after primer synthesis. May also play a role in DNA repair. This is DNA primase large subunit PriL from Archaeoglobus fulgidus (strain ATCC 49558 / DSM 4304 / JCM 9628 / NBRC 100126 / VC-16).